The chain runs to 321 residues: MLVDSFNRVIDYIRVSVTKQCNFRCQYCMPATPLNFFDNEELLPLDNVLEFLKIAIDEGVKKIRITGGEPLLRKGLDEFIAKLHAYNKEVELVLSTNGFLLKKMAKDLKNAGLAQVNVSLDSLKSDRVLKISQKDALKNTLEGIEESLKVGLKLKLNTVVIKSVNDDEILELLEYAKNRHIQIRYIEFMENTHAKSLVKGLKEREILDLIAQKYQIIEAEKPKQGSSKIYTLENGYQFGIIAPHSDDFCQSCNRIRLASDGKICPCLYYQDAIDAKEAIINKDTKNIKRLLKQSVINKPEKNMWNDKNSETPTRAFYYTGG.

A Radical SAM core domain is found at 5 to 233 (SFNRVIDYIR…QGSSKIYTLE (229 aa)). GTP is bound at residue Arg14. [4Fe-4S] cluster-binding residues include Cys21 and Cys25. S-adenosyl-L-methionine is bound at residue Tyr27. Cys28 is a binding site for [4Fe-4S] cluster. Residue Arg64 coordinates GTP. Gly68 is an S-adenosyl-L-methionine binding site. Ser95 contributes to the GTP binding site. Residue Ser119 participates in S-adenosyl-L-methionine binding. Lys155 is a binding site for GTP. Met189 is a binding site for S-adenosyl-L-methionine. Cys249 and Cys252 together coordinate [4Fe-4S] cluster. Residue 254–256 (RIR) participates in GTP binding. Cys266 is a binding site for [4Fe-4S] cluster.

The protein belongs to the radical SAM superfamily. MoaA family. As to quaternary structure, monomer and homodimer. [4Fe-4S] cluster serves as cofactor.

The catalysed reaction is GTP + AH2 + S-adenosyl-L-methionine = (8S)-3',8-cyclo-7,8-dihydroguanosine 5'-triphosphate + 5'-deoxyadenosine + L-methionine + A + H(+). The protein operates within cofactor biosynthesis; molybdopterin biosynthesis. Functionally, catalyzes the cyclization of GTP to (8S)-3',8-cyclo-7,8-dihydroguanosine 5'-triphosphate. This chain is GTP 3',8-cyclase, found in Helicobacter pylori (strain ATCC 700392 / 26695) (Campylobacter pylori).